We begin with the raw amino-acid sequence, 254 residues long: GPI alpha-1,4-mannosyltransferase I, stabilizing subunit (254 aa).

Positions 1–22 (MAAGAVAWLLLWAAWLVGRLAA) are cleaved as a signal peptide. At 23 to 226 (DFSDAPFSAG…PVGLTIHTSL (204 aa)) the chain is on the lumenal side. Residue Asn-211 is glycosylated (N-linked (GlcNAc...) asparagine). A helical transmembrane segment spans residues 227–247 (VCSVTLLITILCSTLILLAVF). At 248–254 (KYGHFSL) the chain is on the cytoplasmic side.

Belongs to the PIGX family. Part of the glycosylphosphatidylinositol-mannosyltransferase I complex that is composed of PIGM and PIGX. Interacts with PIGM; PIGX stabilizes PIGM.

It is found in the endoplasmic reticulum membrane. Its pathway is glycolipid biosynthesis; glycosylphosphatidylinositol-anchor biosynthesis. Functionally, stabilizing subunit of the glycosylphosphatidylinositol-mannosyltransferase I complex which catalyzes the transfer of the first mannose, via an alpha-1,4 bond from a dolichol-phosphate-mannose (Dol-P-Man) to the glucosaminyl acyl phosphatidylinositol (GlcN-(acyl)PI) intermediate to generate alpha-D-Man-(1-&gt;4)-alpha-D-GlcN-(1-&gt;6)-(1-radyl,2-acyl-sn-glycero-3-phospho)-2-acyl-inositol and participates in the sixth step of the glycosylphosphatidylinositol-anchor biosynthesis. Probably acts by stabilizing the mannosyltransferase PIGM. This Mus musculus (Mouse) protein is GPI alpha-1,4-mannosyltransferase I, stabilizing subunit.